We begin with the raw amino-acid sequence, 373 residues long: Peptide chain release factor 2 (373 aa).

Gln251 carries the post-translational modification N5-methylglutamine.

Belongs to the prokaryotic/mitochondrial release factor family. Methylated by PrmC. Methylation increases the termination efficiency of RF2.

The protein resides in the cytoplasm. Peptide chain release factor 2 directs the termination of translation in response to the peptide chain termination codons UGA and UAA. The polypeptide is Peptide chain release factor 2 (Salinispora tropica (strain ATCC BAA-916 / DSM 44818 / JCM 13857 / NBRC 105044 / CNB-440)).